A 325-amino-acid polypeptide reads, in one-letter code: Helicase VP6-A (325 aa).

Disordered stretches follow at residues 1–122 (MLLA…GATG) and 185–230 (DLRR…EPAR). Basic and acidic residues-rich tracts occupy residues 8–18 (VIKRSSEELKQ), 32–54 (EGGK…KDGE), 61–79 (GQKE…DRRI), and 92–105 (LGER…RGDG). Position 106 (Lys106) interacts with ATP. The span at 106 to 122 (KVGGGGGDADAGVGATG) shows a compositional bias: gly residues. 2 stretches are compositionally biased toward basic and acidic residues: residues 185–203 (DLRR…ERGG) and 211–229 (HGDA…EEPA).

This sequence belongs to the orbivirus VP6 family. As to quaternary structure, homohexamer.

Its subcellular location is the virion. The enzyme catalyses ATP + H2O = ADP + phosphate + H(+). Its function is as follows. ATP dependent RNA helicase essential for RNA packaging and viral transcription. Possesses ss- and dsRNA-binding capacity. In Bluetongue virus 17 (isolate USA) (BTV 17), this protein is Helicase VP6-A (Segment-9).